The sequence spans 108 residues: Synaptic plasticity regulator PANTS (108 aa).

The disordered stretch occupies residues 58-108 (KNHSTQAKDSLQESERKRLADQRKFTPVWELRQKPPSDWHLPLNQGEPQDP). Over residues 67-81 (SLQESERKRLADQRK) the composition is skewed to basic and acidic residues.

This sequence belongs to the UPF0545 family. In terms of processing, rapidly degraded by proteolysis following neuronal stimulation, resulting in increased AMPA receptor clustering.

The protein resides in the synapse. It localises to the synaptic cleft. Its function is as follows. Negatively regulates long-term potentiation and modulates adult synaptic plasticity. The sequence is that of Synaptic plasticity regulator PANTS from Danio rerio (Zebrafish).